A 327-amino-acid chain; its full sequence is Lipoyl synthase (327 aa).

[4Fe-4S] cluster-binding residues include Cys-72, Cys-77, Cys-83, Cys-98, Cys-102, Cys-105, and Ser-313. In terms of domain architecture, Radical SAM core spans 83–302 (CWSHGTATIM…RKVGLEKGFL (220 aa)).

It belongs to the radical SAM superfamily. Lipoyl synthase family. [4Fe-4S] cluster is required as a cofactor.

The protein localises to the cytoplasm. It catalyses the reaction [[Fe-S] cluster scaffold protein carrying a second [4Fe-4S](2+) cluster] + N(6)-octanoyl-L-lysyl-[protein] + 2 oxidized [2Fe-2S]-[ferredoxin] + 2 S-adenosyl-L-methionine + 4 H(+) = [[Fe-S] cluster scaffold protein] + N(6)-[(R)-dihydrolipoyl]-L-lysyl-[protein] + 4 Fe(3+) + 2 hydrogen sulfide + 2 5'-deoxyadenosine + 2 L-methionine + 2 reduced [2Fe-2S]-[ferredoxin]. Its pathway is protein modification; protein lipoylation via endogenous pathway; protein N(6)-(lipoyl)lysine from octanoyl-[acyl-carrier-protein]: step 2/2. Its function is as follows. Catalyzes the radical-mediated insertion of two sulfur atoms into the C-6 and C-8 positions of the octanoyl moiety bound to the lipoyl domains of lipoate-dependent enzymes, thereby converting the octanoylated domains into lipoylated derivatives. This chain is Lipoyl synthase, found in Francisella tularensis subsp. mediasiatica (strain FSC147).